Consider the following 76-residue polypeptide: Tautomerase PptA (76 aa).

Catalysis depends on Pro2, which acts as the Proton acceptor; via imino nitrogen.

It belongs to the 4-oxalocrotonate tautomerase family. PptA subfamily. In terms of assembly, homodimer.

It localises to the cytoplasm. The sequence is that of Tautomerase PptA from Pectobacterium atrosepticum (strain SCRI 1043 / ATCC BAA-672) (Erwinia carotovora subsp. atroseptica).